Reading from the N-terminus, the 201-residue chain is Potassium-transporting ATPase KdpC subunit (201 aa).

Residues 13–33 traverse the membrane as a helical segment; sequence IIFMIFTILCGGIYTIFITGI.

This sequence belongs to the KdpC family. In terms of assembly, the system is composed of three essential subunits: KdpA, KdpB and KdpC.

Its subcellular location is the cell membrane. Its function is as follows. Part of the high-affinity ATP-driven potassium transport (or Kdp) system, which catalyzes the hydrolysis of ATP coupled with the electrogenic transport of potassium into the cytoplasm. This subunit acts as a catalytic chaperone that increases the ATP-binding affinity of the ATP-hydrolyzing subunit KdpB by the formation of a transient KdpB/KdpC/ATP ternary complex. The chain is Potassium-transporting ATPase KdpC subunit from Clostridium botulinum (strain Eklund 17B / Type B).